Consider the following 574-residue polypeptide: Protein NDNF (574 aa).

The N-terminal stretch at Met1–Gly19 is a signal peptide. The interval Glu97–Thr118 is disordered. Fibronectin type-III domains are found at residues Pro174–Ser329 and Pro451–Ser560. Asn327 carries N-linked (GlcNAc...) asparagine glycosylation.

The protein resides in the secreted. Functionally, secretory protein that plays a role in various cellular processes. Acts as a chemorepellent acting on gonadotropin-releasing hormone (GnRH) expressing neurons regulating their migration to the hypothalamus. Also promotes neuron migration, growth and survival as well as neurite outgrowth and is involved in the development of the olfactory system. May also act through the regulation of growth factors activity and downstream signaling. Also regulates extracellular matrix assembly and cell adhesiveness. Promotes endothelial cell survival, vessel formation and plays an important role in the process of revascularization through NOS3-dependent mechanisms. The chain is Protein NDNF (ndnf) from Danio rerio (Zebrafish).